A 446-amino-acid chain; its full sequence is MTTLTLVLTAVGSVLLLLFLVMKARMHAFLALMVVSMGAGLFSGMPLDKIAATMEKGMGGTLGFLAVVVALGAMFGKILHETGAVDQIAVKMLKSFGHSRAHYAIGLAGLVCALPLFFEVAIVLLISVAFSMARHTGTNLVKLVIPLFAGVAAAAAFLVPGPAPMLLASQMNADFGWMILIGLCAAIPGMIIAGPLWGNFISRYVELHIPDDISEPHLGEGKMPSFGFSLSLILLPLVLVGLKTIAARFVPEGSTAYEWFEFIGHPFTAILVACLVAIYGLAMRQGMPKDKVMEICGHALQPAGIILLVIGAGGVFKQVLVDSGVGPALGEALTGMGLPIAITCFVLAAAVRIIQGSATVACLTAVGLVMPVIEQLNYSGAQMAALSICIAGGSIVVSHVNDAGFWLFGKFTGATEAETLKTWTMMETILGTVGAIVGMIAFQLLS.

Methionine 1 is a topological domain (cytoplasmic). A helical transmembrane segment spans residues 2 to 22; the sequence is TTLTLVLTAVGSVLLLLFLVM. The Periplasmic segment spans residues 23–26; that stretch reads KARM. A helical transmembrane segment spans residues 27-47; it reads HAFLALMVVSMGAGLFSGMPL. Over 48 to 58 the chain is Cytoplasmic; that stretch reads DKIAATMEKGM. A helical membrane pass occupies residues 59 to 79; the sequence is GGTLGFLAVVVALGAMFGKIL. The Periplasmic segment spans residues 80–109; the sequence is HETGAVDQIAVKMLKSFGHSRAHYAIGLAG. Residues 110-130 traverse the membrane as a helical segment; it reads LVCALPLFFEVAIVLLISVAF. Residues 131–142 are Cytoplasmic-facing; that stretch reads SMARHTGTNLVK. Residues 143–163 traverse the membrane as a helical segment; that stretch reads LVIPLFAGVAAAAAFLVPGPA. The Periplasmic segment spans residues 164–176; sequence PMLLASQMNADFG. The helical transmembrane segment at 177-197 threads the bilayer; sequence WMILIGLCAAIPGMIIAGPLW. Residues 198–225 are Cytoplasmic-facing; sequence GNFISRYVELHIPDDISEPHLGEGKMPS. Residues 226 to 246 traverse the membrane as a helical segment; the sequence is FGFSLSLILLPLVLVGLKTIA. Residues 247–261 are Periplasmic-facing; it reads ARFVPEGSTAYEWFE. A helical membrane pass occupies residues 262-282; the sequence is FIGHPFTAILVACLVAIYGLA. Over 283-294 the chain is Cytoplasmic; sequence MRQGMPKDKVME. A helical transmembrane segment spans residues 295–315; sequence ICGHALQPAGIILLVIGAGGV. Over 316-330 the chain is Periplasmic; that stretch reads FKQVLVDSGVGPALG. The helical transmembrane segment at 331-351 threads the bilayer; it reads EALTGMGLPIAITCFVLAAAV. Residue arginine 352 is a topological domain, cytoplasmic. Residues 353-373 form a helical membrane-spanning segment; the sequence is IIQGSATVACLTAVGLVMPVI. Residues 374 to 387 are Periplasmic-facing; sequence EQLNYSGAQMAALS. The chain crosses the membrane as a helical span at residues 388–408; that stretch reads ICIAGGSIVVSHVNDAGFWLF. At 409-424 the chain is on the cytoplasmic side; the sequence is GKFTGATEAETLKTWT. The helical transmembrane segment at 425-445 threads the bilayer; that stretch reads MMETILGTVGAIVGMIAFQLL. A topological domain (periplasmic) is located at residue serine 446.

It belongs to the GntP permease family.

It localises to the cell inner membrane. Part of the gluconate utilization system Gnt-I; low-affinity intake of gluconate. The polypeptide is Low-affinity gluconate transporter (gntU) (Escherichia coli O157:H7).